We begin with the raw amino-acid sequence, 248 residues long: UPF0736 protein BCE33L1074 (248 aa).

This sequence belongs to the UPF0736 family.

The chain is UPF0736 protein BCE33L1074 from Bacillus cereus (strain ZK / E33L).